The primary structure comprises 351 residues: Neutral protease 2 homolog MGG_10927 (351 aa).

A signal peptide spans 1 to 16 (MKFSIGVSLLATLAGA). A propeptide spanning residues 17–177 (VNVDMAKRDT…AAFLAKRTIV (161 aa)) is cleaved from the precursor. Disulfide bonds link Cys-181–Cys-253 and Cys-260–Cys-278. His-303 provides a ligand contact to Zn(2+). Residue Glu-304 is part of the active site. Zn(2+) is bound at residue His-307.

This sequence belongs to the peptidase M35 family. The cofactor is Zn(2+).

Its subcellular location is the secreted. It catalyses the reaction Preferential cleavage of bonds with hydrophobic residues in P1'. Also 3-Asn-|-Gln-4 and 8-Gly-|-Ser-9 bonds in insulin B chain.. Its function is as follows. Secreted metalloproteinase that allows assimilation of proteinaceous substrates. Shows high activities on basic nuclear substrates such as histone and protamine. The chain is Neutral protease 2 homolog MGG_10927 from Colletotrichum graminicola (strain M1.001 / M2 / FGSC 10212) (Maize anthracnose fungus).